Reading from the N-terminus, the 1222-residue chain is ATP-dependent helicase/nuclease subunit A (1222 aa).

The UvrD-like helicase ATP-binding domain maps to 27–483 (HLQENERCRD…RDYQKKPEQG (457 aa)). 48 to 55 (AIYTSGQN) contributes to the ATP binding site. Residues 512-798 (ESVGDVLYDE…ADVEVATPKQ (287 aa)) enclose the UvrD-like helicase C-terminal domain.

The protein belongs to the helicase family. AddA subfamily. In terms of assembly, heterodimer of AddA and AddB/RexB. The cofactor is Mg(2+).

The enzyme catalyses Couples ATP hydrolysis with the unwinding of duplex DNA by translocating in the 3'-5' direction.. It catalyses the reaction ATP + H2O = ADP + phosphate + H(+). The heterodimer acts as both an ATP-dependent DNA helicase and an ATP-dependent, dual-direction single-stranded exonuclease. Recognizes the chi site generating a DNA molecule suitable for the initiation of homologous recombination. The AddA nuclease domain is required for chi fragment generation; this subunit has the helicase and 3' -&gt; 5' nuclease activities. The chain is ATP-dependent helicase/nuclease subunit A from Streptococcus pyogenes serotype M1.